Reading from the N-terminus, the 161-residue chain is Photosystem II extrinsic protein V (161 aa).

An N-terminal signal peptide occupies residues 1–25 (MKKFFISVVFIVLLTFTTFINSATA). Positions 61, 64, 65, and 116 each coordinate heme c.

Belongs to the cytochrome c family. PsbV subfamily. PSII is composed of 1 copy each of membrane proteins PsbA, PsbB, PsbC, PsbD, PsbE, PsbF, PsbH, PsbI, PsbJ, PsbK, PsbL, PsbM, PsbT, PsbX, PsbY, PsbZ, Psb30/Ycf12, peripheral proteins PsbO, CyanoQ (PsbQ), PsbU, PsbV and a large number of cofactors. It forms dimeric complexes. Requires heme c as cofactor.

The protein localises to the cellular thylakoid membrane. In terms of biological role, one of the extrinsic, lumenal subunits of photosystem II (PSII). PSII is a light-driven water plastoquinone oxidoreductase, using light energy to abstract electrons from H(2)O, generating a proton gradient subsequently used for ATP formation. The extrinsic proteins stabilize the structure of photosystem II oxygen-evolving complex (OEC), the ion environment of oxygen evolution and protect the OEC against heat-induced inactivation. Low-potential cytochrome c that plays a role in the OEC of PSII. The polypeptide is Photosystem II extrinsic protein V (Trichodesmium erythraeum (strain IMS101)).